A 397-amino-acid polypeptide reads, in one-letter code: Elongation factor Tu-1 (397 aa).

Residues 10–206 (KPHVNIGTIG…AVDENIPEPE (197 aa)) enclose the tr-type G domain. A G1 region spans residues 19 to 26 (GHIDHGKT). Residue 19–26 (GHIDHGKT) participates in GTP binding. Residue threonine 26 coordinates Mg(2+). Positions 62 to 66 (GITIS) are G2. The G3 stretch occupies residues 83 to 86 (DCPG). Residues 83–87 (DCPGH) and 138–141 (NKAD) each bind GTP. A G4 region spans residues 138–141 (NKAD). The G5 stretch occupies residues 176–178 (SAL). Threonine 386 carries the post-translational modification Phosphothreonine.

This sequence belongs to the TRAFAC class translation factor GTPase superfamily. Classic translation factor GTPase family. EF-Tu/EF-1A subfamily. Monomer. In terms of processing, phosphorylated on threonine and serine.

The protein resides in the cytoplasm. The catalysed reaction is GTP + H2O = GDP + phosphate + H(+). GTP hydrolase that promotes the GTP-dependent binding of aminoacyl-tRNA to the A-site of ribosomes during protein biosynthesis. This Streptomyces collinus protein is Elongation factor Tu-1.